Here is a 542-residue protein sequence, read N- to C-terminus: CTP synthase (542 aa).

The segment at 1–265 (MARYVFITGG…DDEVLAAFGI (265 aa)) is amidoligase domain. Residue Ser13 coordinates CTP. Ser13 lines the UTP pocket. ATP is bound by residues 14 to 19 (SLGKGI) and Asp71. Residues Asp71 and Glu139 each contribute to the Mg(2+) site. Residues 146–148 (DIE), 186–191 (KTKPTQ), and Lys222 each bind CTP. Residues 186–191 (KTKPTQ) and Lys222 contribute to the UTP site. A Glutamine amidotransferase type-1 domain is found at 291-541 (TIAIVGKYTG…IEAATEQSRL (251 aa)). Gly353 is an L-glutamine binding site. Residue Cys380 is the Nucleophile; for glutamine hydrolysis of the active site. Residues 381-384 (FGMQ), Glu404, and Arg469 each bind L-glutamine. Residues His514 and Glu516 contribute to the active site.

Belongs to the CTP synthase family. As to quaternary structure, homotetramer.

The catalysed reaction is UTP + L-glutamine + ATP + H2O = CTP + L-glutamate + ADP + phosphate + 2 H(+). The enzyme catalyses L-glutamine + H2O = L-glutamate + NH4(+). It catalyses the reaction UTP + NH4(+) + ATP = CTP + ADP + phosphate + 2 H(+). It participates in pyrimidine metabolism; CTP biosynthesis via de novo pathway; CTP from UDP: step 2/2. Its activity is regulated as follows. Allosterically activated by GTP, when glutamine is the substrate; GTP has no effect on the reaction when ammonia is the substrate. The allosteric effector GTP functions by stabilizing the protein conformation that binds the tetrahedral intermediate(s) formed during glutamine hydrolysis. Inhibited by the product CTP, via allosteric rather than competitive inhibition. Catalyzes the ATP-dependent amination of UTP to CTP with either L-glutamine or ammonia as the source of nitrogen. Regulates intracellular CTP levels through interactions with the four ribonucleotide triphosphates. In Rhizobium leguminosarum bv. trifolii (strain WSM2304), this protein is CTP synthase.